The primary structure comprises 1022 residues: Leucine--tRNA ligase (1022 aa).

The short motif at 47-57 (PYPNSPMHLGH) is the 'HIGH' region element. The 'KMSKS' region signature appears at 697–701 (KMSKS). Lys700 contacts ATP.

This sequence belongs to the class-I aminoacyl-tRNA synthetase family.

The protein localises to the cytoplasm. It catalyses the reaction tRNA(Leu) + L-leucine + ATP = L-leucyl-tRNA(Leu) + AMP + diphosphate. In Ignicoccus hospitalis (strain KIN4/I / DSM 18386 / JCM 14125), this protein is Leucine--tRNA ligase.